We begin with the raw amino-acid sequence, 98 residues long: MKTAIAERIEDKLYQNRYLVDAGRPHITVRPHRSPSLNLLALTRVCPAKCYELNETGQVEVTADGCMECGTCRVLCEANGDVEWSYPRGGFGVLFKFG.

One can recognise a 4Fe-4S ferredoxin-type domain in the interval 57–87 (GQVEVTADGCMECGTCRVLCEANGDVEWSYP).

This sequence to ferredoxins from P.putida and C.tartarivorum, ferredoxin I from A.vinelandii, ferredoxin II from D.desulfuricans.

Could be a 3Fe-4S cluster-containing protein. This chain is Ferredoxin-like protein (fixX), found in Rhizobium meliloti (strain 1021) (Ensifer meliloti).